Consider the following 116-residue polypeptide: Somatostatin (116 aa).

An N-terminal signal peptide occupies residues 1–24; that stretch reads MLSCRLQCALAALCIVLALGGVTG. Positions 35–88 are excised as a propeptide; it reads LQKSLAAATGKQELAKYFLAELLSEPNQTENDALEPEDLPQAAEQDEMRLELQR. T43 is modified (threonine amide). C105 and C116 are disulfide-bonded.

The protein belongs to the somatostatin family. In terms of processing, C-terminal amidation of the neuronostatin peptide is required for its biological activity, including for the regulation of mean arterial pressure. In terms of tissue distribution, in the pancreas, somatostatin is expressed in delta cells of the islets of Langerhans. In the stomach, it is expressed in parietal cells of oxyntic mucosa and in the small intestine, it is found in the villus (at protein level). Neuronostatin is expressed in the pancreas in delta cells of the islets of Langerhans, as well as in the stomach, in parietal cells of oxyntic mucosa and in the small intestine, in the villus (at protein level).

It localises to the secreted. Its function is as follows. Inhibits the secretion of pituitary hormones, including that of growth hormone/somatotropin (GH1), PRL, ACTH, luteinizing hormone (LH) and TSH. Also impairs ghrelin- and GnRH-stimulated secretion of GH1 and LH; the inhibition of ghrelin-stimulated secretion of GH1 can be further increased by neuronostatin. Functionally, may enhance low-glucose-induced glucagon release by pancreatic alpha cells. This effect may be mediated by binding to GPR107 and PKA activation. May regulate cardiac contractile function. May compromise cardiomyocyte viability. In the central nervous system, may impair memory retention and may affect hippocampal excitability. May also have anxiolytic and anorexigenic effects. May play a role in arterial pressure regulation. May inhibit basal, but not ghrelin- or GnRH-stimulated secretion of GH1 or LH, but does not affect the release of other pituitary hormones, including PRL, ACTH, FSH or TSH. Potentiates inhibitory action of somatostatin on ghrelin-stimulated secretion of GH1, but not that on GnRH-stimulated secretion of LH. This chain is Somatostatin (Sst), found in Mus musculus (Mouse).